A 606-amino-acid chain; its full sequence is MNMFSSLSLVTLLLLTMPIMMMSLNTYKPSNYPLYVKTAISYAFITSMIPTMMFIHSGQELIISNWHWLTIQTLKLSLSFKMDYFSMMFTPVALFVTWSIMEFSMWYMHSDPNINKFFKYLLLFLITMLILVTANNLFQLFIGWEGVGIMSFLLIGWWYGRADANTAALQAVLYNRIGDIGFILAMAWFLTNLNTWDLQQIFMLNPSDSNMPLIGLALAATGKSAQFGLHPWLPSAMEGPTPVSALLHSSTMVVAGIFLLIRFYPLTENNKFIQSITLCLGAITTLFTAMCALTQNDIKKIIAFSTSSQLGLMMVTIGINQPYLAFLHICTHAFFKAMLFMCSGSIIHSLNDEQDIRKMGGLFKAMPFTTTALIVGSLALTGMPFLTGFYSKDLIIEAANTSYTNAWALLMTLIATSFTAIYSTRIIFFALLGQPRFPTLVSINENNPLLINSIKRLLIGSLFAGYIISNNIPPTTIPQMTMPYYLKTTALIVTILGFILALEISNMTKNLKYHYPSNAFKFSTLLGYFPTIMHRLAPYMNLSMSQKSASSLLDLIWLEAILPKTISLAQMKASTLVTNQKGLIKLYFLSFLITILISMMLFNFHE.

Transmembrane regions (helical) follow at residues 4-24 (FSSLSLVTLLLLTMPIMMMSL), 43-63 (AFITSMIPTMMFIHSGQELII), 87-107 (MMFTPVALFVTWSIMEFSMWY), 117-137 (FFKYLLLFLITMLILVTANNL), 140-160 (LFIGWEGVGIMSFLLIGWWYG), 171-191 (AVLYNRIGDIGFILAMAWFLT), 213-233 (LIGLALAATGKSAQFGLHPWL), 241-261 (TPVSALLHSSTMVVAGIFLLI), 272-292 (FIQSITLCLGAITTLFTAMCA), 310-330 (LGLMMVTIGINQPYLAFLHIC), 366-386 (MPFTTTALIVGSLALTGMPFL), 413-433 (LIATSFTAIYSTRIIFFALLG), 457-477 (LLIGSLFAGYIISNNIPPTTI), 482-502 (MPYYLKTTALIVTILGFILAL), and 582-602 (GLIKLYFLSFLITILISMMLF).

In terms of assembly, core subunit of respiratory chain NADH dehydrogenase (Complex I) which is composed of 45 different subunits.

The protein resides in the mitochondrion inner membrane. It carries out the reaction a ubiquinone + NADH + 5 H(+)(in) = a ubiquinol + NAD(+) + 4 H(+)(out). Core subunit of the mitochondrial membrane respiratory chain NADH dehydrogenase (Complex I) which catalyzes electron transfer from NADH through the respiratory chain, using ubiquinone as an electron acceptor. Essential for the catalytic activity and assembly of complex I. This chain is NADH-ubiquinone oxidoreductase chain 5 (MT-ND5), found in Bos indicus (Zebu).